The chain runs to 118 residues: MATPSLRGRLARFANPGKPILKPNKPLILANRVGNRRREKGEATCITEMSMMMACWKQNEFRDEACRKEIQDFFDCSSRAQEARKMRSIQESLGQSESLSPHKMTKLLQRFPNKSHLI.

The CHCH domain occupies 42–84; sequence EATCITEMSMMMACWKQNEFRDEACRKEIQDFFDCSSRAQEAR. Short sequence motifs (cx9C motif) lie at residues 45 to 55 and 66 to 76; these read CITEMSMMMAC and CRKEIQDFFDC. Disulfide bonds link C45/C76 and C55/C66. The disordered stretch occupies residues 86–105; it reads MRSIQESLGQSESLSPHKMT. Positions 89–99 are enriched in polar residues; it reads IQESLGQSESL.

Belongs to the mitochondrion-specific ribosomal protein mS37 family. Component of the mitochondrial ribosome small subunit (28S) which comprises a 12S rRNA and about 30 distinct proteins.

The protein resides in the mitochondrion. It is found in the nucleus. This chain is Small ribosomal subunit protein mS37 (Chchd1), found in Mus musculus (Mouse).